A 279-amino-acid chain; its full sequence is Probable endonuclease 4 (279 aa).

Positions 69, 109, 145, 179, 182, 216, 229, 231, and 261 each coordinate Zn(2+).

Belongs to the AP endonuclease 2 family. Zn(2+) is required as a cofactor.

The enzyme catalyses Endonucleolytic cleavage to 5'-phosphooligonucleotide end-products.. Its function is as follows. Endonuclease IV plays a role in DNA repair. It cleaves phosphodiester bonds at apurinic or apyrimidinic (AP) sites, generating a 3'-hydroxyl group and a 5'-terminal sugar phosphate. The protein is Probable endonuclease 4 of Chlorobium phaeovibrioides (strain DSM 265 / 1930) (Prosthecochloris vibrioformis (strain DSM 265)).